The chain runs to 420 residues: UDP-N-acetylglucosamine 1-carboxyvinyltransferase (420 aa).

A phosphoenolpyruvate-binding site is contributed by 22–23 (KN). Arg-93 is a binding site for UDP-N-acetyl-alpha-D-glucosamine. Cys-117 functions as the Proton donor in the catalytic mechanism. Residue Cys-117 is modified to 2-(S-cysteinyl)pyruvic acid O-phosphothioketal. Residues Asp-307 and Ile-329 each coordinate UDP-N-acetyl-alpha-D-glucosamine.

It belongs to the EPSP synthase family. MurA subfamily.

It is found in the cytoplasm. The enzyme catalyses phosphoenolpyruvate + UDP-N-acetyl-alpha-D-glucosamine = UDP-N-acetyl-3-O-(1-carboxyvinyl)-alpha-D-glucosamine + phosphate. It participates in cell wall biogenesis; peptidoglycan biosynthesis. Functionally, cell wall formation. Adds enolpyruvyl to UDP-N-acetylglucosamine. This Saccharophagus degradans (strain 2-40 / ATCC 43961 / DSM 17024) protein is UDP-N-acetylglucosamine 1-carboxyvinyltransferase.